The following is a 237-amino-acid chain: Prospore formation at selected spindle poles protein 1 (237 aa).

It localises to the nucleus. Its subcellular location is the cytoplasm. The protein localises to the cytoskeleton. The protein resides in the microtubule organizing center. It is found in the spindle pole body. Involved in the pathway that organizes the shaping and sizing of the prospore membrane (PSM) during sporulation. Required to localize MPC54 to all four spindle pole bodies, and localize DON1 and SPO14 to four prospore membranes. The sequence is that of Prospore formation at selected spindle poles protein 1 (PFS1) from Saccharomyces cerevisiae (strain ATCC 204508 / S288c) (Baker's yeast).